We begin with the raw amino-acid sequence, 891 residues long: MGRQFICSIYLPYTINFHLDELEGNHESHPAITHQEKVTQTHRDSVKIDDILTRLSISKSESGQATPVLTPQLEGMNDYFSLGPSKRTGGSMTPGLGAMSPIPGSGRSSPLYTQPRSRATSPSRVRQADRFAAPGIGAGALPIRRKRRDSLAKSVALFESARWSVERGVVGNSGLFHAVDAAVRDHGLQNPLWVGLLGMPTESLSEKTKNAISGALLVKHQSLVVYTSDSNFEGHYNHYCRKILWPSLHYQHNEIFSFFHEESNWDDYVAVNRAFADALIKNYKTGDTIWVNDYHLLLVPNMVRERIPSAIIGLFIHVSFPSSEVFRCFARRKELLQGMLGSNLIGFQTEEYKRHFLQSCSRVLYAESTFDRILLDDRYIDVYAHPIGADPVLVDKWLENPETLEVKEVLEKRYANLNIFVGCDKMDPIRGIREKLLAFEQFLYDNPEYQKNTILIQTSTFTEEQKEYGVAISDIVTRINSAFGDFSLDHLPVTILSSDLSYPQYLALLSVADAFIVTSLREGMSLTCHEFILTQRQKKSPLIVSEFIGCASMFSNGAFIVNPWSTLELSLSMKKALTLSTNERNQRYSNCLDVVLTHSASNWVTGFETKLKKSWTSQQKRDFSRLPRFTLNFIGNRYDHAKKRLLILNFDGNAVTWEGRHEFVDFHYGYMVSILSKLIADDRNIVYIASCLEEDELESLFMHVPGVGLIAENGCYVLPHYAENVHQSWIRLYKKQQMDWREPLHDIIQYYSERTPGSSLIDHGFAMEFNYVKAENRENGLRSAGELASSINETQHGCRAVPLDGRVLCEPTTISKATAANYIMTHLIKNPEELDLILVAGNNRTDESVFAWANKSKVSSFTVSMGVGNTEAKAYTDGIPSFFNVLNSLCA.

Phosphothreonine is present on Thr88. Positions 88–126 (TGGSMTPGLGAMSPIPGSGRSSPLYTQPRSRATSPSRVR) are disordered. Residues 106–124 (GRSSPLYTQPRSRATSPSR) show a composition bias toward polar residues. 2 positions are modified to phosphoserine: Ser108 and Ser109. Residues 132–613 (AAPGIGAGAL…VTGFETKLKK (482 aa)) are glycosyltransferase.

It in the N-terminal section; belongs to the glycosyltransferase 20 family.

It carries out the reaction D-glucose 6-phosphate + UDP-alpha-D-glucose = alpha,alpha-trehalose 6-phosphate + UDP + H(+). The polypeptide is Putative alpha,alpha-trehalose-phosphate synthase [UDP-forming] 100 kDa subunit (Schizosaccharomyces pombe (strain 972 / ATCC 24843) (Fission yeast)).